The following is a 545-amino-acid chain: Membrane protein insertase YidC (545 aa).

4 helical membrane passes run 350-370, 424-444, 461-481, and 498-518; these read IIGNWGWAIVVLTIIVKAVLY, LPMLLQIPVFIGLYWALFASV, ADPYYILPIIMAATMFAQTYL, and PLVFSVMFFFFPAGLVLYWVV.

The protein belongs to the OXA1/ALB3/YidC family. Type 1 subfamily. Interacts with the Sec translocase complex via SecD. Specifically interacts with transmembrane segments of nascent integral membrane proteins during membrane integration.

The protein resides in the cell inner membrane. Required for the insertion and/or proper folding and/or complex formation of integral membrane proteins into the membrane. Involved in integration of membrane proteins that insert both dependently and independently of the Sec translocase complex, as well as at least some lipoproteins. Aids folding of multispanning membrane proteins. In Neisseria gonorrhoeae (strain ATCC 700825 / FA 1090), this protein is Membrane protein insertase YidC.